The primary structure comprises 338 residues: Ketol-acid reductoisomerase (NADP(+)) (338 aa).

The 181-residue stretch at 2–182 folds into the KARI N-terminal Rossmann domain; that stretch reads TKMYYEKDTD…GGARAGVLET (181 aa). NADP(+)-binding positions include 25-28, Ser-51, Ser-53, and 83-86; these read YGSQ and DELQ. His-108 is an active-site residue. An NADP(+)-binding site is contributed by Gly-134. The KARI C-terminal knotted domain maps to 183–330; sequence TFRTETETDL…SEIRKLYCWN (148 aa). Positions 191, 195, 227, and 231 each coordinate Mg(2+). Residue Ser-252 participates in substrate binding.

Belongs to the ketol-acid reductoisomerase family. The cofactor is Mg(2+).

The catalysed reaction is (2R)-2,3-dihydroxy-3-methylbutanoate + NADP(+) = (2S)-2-acetolactate + NADPH + H(+). It catalyses the reaction (2R,3R)-2,3-dihydroxy-3-methylpentanoate + NADP(+) = (S)-2-ethyl-2-hydroxy-3-oxobutanoate + NADPH + H(+). It participates in amino-acid biosynthesis; L-isoleucine biosynthesis; L-isoleucine from 2-oxobutanoate: step 2/4. The protein operates within amino-acid biosynthesis; L-valine biosynthesis; L-valine from pyruvate: step 2/4. Involved in the biosynthesis of branched-chain amino acids (BCAA). Catalyzes an alkyl-migration followed by a ketol-acid reduction of (S)-2-acetolactate (S2AL) to yield (R)-2,3-dihydroxy-isovalerate. In the isomerase reaction, S2AL is rearranged via a Mg-dependent methyl migration to produce 3-hydroxy-3-methyl-2-ketobutyrate (HMKB). In the reductase reaction, this 2-ketoacid undergoes a metal-dependent reduction by NADPH to yield (R)-2,3-dihydroxy-isovalerate. This is Ketol-acid reductoisomerase (NADP(+)) from Clostridium botulinum (strain Alaska E43 / Type E3).